We begin with the raw amino-acid sequence, 144 residues long: Cysteine desulfuration protein SufE (144 aa).

Catalysis depends on cysteine 51, which acts as the Cysteine persulfide intermediate.

This sequence belongs to the SufE family. As to quaternary structure, homodimer. Interacts with SufS.

The protein localises to the cytoplasm. The protein operates within cofactor biosynthesis; iron-sulfur cluster biosynthesis. Participates in cysteine desulfuration mediated by SufS. Cysteine desulfuration mobilizes sulfur from L-cysteine to yield L-alanine and constitutes an essential step in sulfur metabolism for biosynthesis of a variety of sulfur-containing biomolecules. Functions as a sulfur acceptor for SufS, by mediating the direct transfer of the sulfur atom from the S-sulfanylcysteine of SufS, an intermediate product of cysteine desulfuration process. This chain is Cysteine desulfuration protein SufE, found in Wigglesworthia glossinidia brevipalpis.